The chain runs to 644 residues: 3D-(3,5/4)-trihydroxycyclohexane-1,2-dione hydrolase 2 (644 aa).

A thiamine diphosphate-binding site is contributed by glutamate 65. The tract at residues 442–522 is thiamine pyrophosphate binding; it reads SLPGDLQRMW…INVLLFDNSG (81 aa). The Mg(2+) site is built by aspartate 493 and asparagine 520.

The protein belongs to the TPP enzyme family. Requires Mg(2+) as cofactor. It depends on thiamine diphosphate as a cofactor.

The catalysed reaction is 3D-3,5/4-trihydroxycyclohexane-1,2-dione + H2O = 5-deoxy-D-glucuronate + H(+). Its pathway is polyol metabolism; myo-inositol degradation into acetyl-CoA; acetyl-CoA from myo-inositol: step 3/7. Functionally, involved in the cleavage of the C1-C2 bond of 3D-(3,5/4)-trihydroxycyclohexane-1,2-dione (THcHDO) to yield 5-deoxy-glucuronate (5DG). The polypeptide is 3D-(3,5/4)-trihydroxycyclohexane-1,2-dione hydrolase 2 (Bacillus cereus (strain ZK / E33L)).